The primary structure comprises 140 residues: Nucleoside diphosphate kinase (140 aa).

ATP contacts are provided by K11, F59, R87, T93, R104, and N114. H117 functions as the Pros-phosphohistidine intermediate in the catalytic mechanism.

The protein belongs to the NDK family. As to quaternary structure, homotetramer. Mg(2+) is required as a cofactor.

Its subcellular location is the cytoplasm. It carries out the reaction a 2'-deoxyribonucleoside 5'-diphosphate + ATP = a 2'-deoxyribonucleoside 5'-triphosphate + ADP. The catalysed reaction is a ribonucleoside 5'-diphosphate + ATP = a ribonucleoside 5'-triphosphate + ADP. Functionally, major role in the synthesis of nucleoside triphosphates other than ATP. The ATP gamma phosphate is transferred to the NDP beta phosphate via a ping-pong mechanism, using a phosphorylated active-site intermediate. The protein is Nucleoside diphosphate kinase of Rhizobium johnstonii (strain DSM 114642 / LMG 32736 / 3841) (Rhizobium leguminosarum bv. viciae).